Reading from the N-terminus, the 338-residue chain is Fructose-1,6-bisphosphatase class 1 (338 aa).

Mg(2+) contacts are provided by glutamate 92, aspartate 115, leucine 117, and aspartate 118. Substrate contacts are provided by residues 118 to 121, asparagine 211, tyrosine 244, 262 to 264, and lysine 274; these read DGSS and YLY. A Mg(2+)-binding site is contributed by glutamate 280.

It belongs to the FBPase class 1 family. Homotetramer. Mg(2+) serves as cofactor.

The protein resides in the cytoplasm. The enzyme catalyses beta-D-fructose 1,6-bisphosphate + H2O = beta-D-fructose 6-phosphate + phosphate. The protein operates within carbohydrate biosynthesis; gluconeogenesis. This chain is Fructose-1,6-bisphosphatase class 1, found in Vibrio parahaemolyticus serotype O3:K6 (strain RIMD 2210633).